The sequence spans 101 residues: Small ribosomal subunit protein uS10 (101 aa).

It belongs to the universal ribosomal protein uS10 family. As to quaternary structure, part of the 30S ribosomal subunit.

Involved in the binding of tRNA to the ribosomes. In Phocaeicola vulgatus (strain ATCC 8482 / DSM 1447 / JCM 5826 / CCUG 4940 / NBRC 14291 / NCTC 11154) (Bacteroides vulgatus), this protein is Small ribosomal subunit protein uS10.